We begin with the raw amino-acid sequence, 455 residues long: UDP-N-acetylmuramoylalanine--D-glutamate ligase (455 aa).

117–123 (GTNGKTT) provides a ligand contact to ATP.

It belongs to the MurCDEF family.

Its subcellular location is the cytoplasm. The catalysed reaction is UDP-N-acetyl-alpha-D-muramoyl-L-alanine + D-glutamate + ATP = UDP-N-acetyl-alpha-D-muramoyl-L-alanyl-D-glutamate + ADP + phosphate + H(+). It participates in cell wall biogenesis; peptidoglycan biosynthesis. Functionally, cell wall formation. Catalyzes the addition of glutamate to the nucleotide precursor UDP-N-acetylmuramoyl-L-alanine (UMA). The protein is UDP-N-acetylmuramoylalanine--D-glutamate ligase of Alkaliphilus metalliredigens (strain QYMF).